Reading from the N-terminus, the 89-residue chain is UPF0335 protein RPC_3979 (89 aa).

It belongs to the UPF0335 family.

This is UPF0335 protein RPC_3979 from Rhodopseudomonas palustris (strain BisB18).